The chain runs to 243 residues: Terpene cyclase penB (243 aa).

3 helical membrane passes run 19–39 (IANI…VGMI), 48–68 (YGMA…YSLI), and 78–98 (GVFI…IKFA). Asn111 is a glycosylation site (N-linked (GlcNAc...) asparagine). 4 helical membrane passes run 112–132 (LSLI…ALAA), 137–157 (SLAY…GGLC), 172–194 (LWLS…WMYW), and 205–225 (LVLW…LCYW).

This sequence belongs to the paxB family.

It localises to the membrane. It participates in secondary metabolite biosynthesis. Terpene cyclase; part of the gene cluster that mediates the biosynthesis of the indole diterpenes penitrems. The geranylgeranyl diphosphate (GGPP) synthase penG catalyzes the first step in penitrem biosynthesis via conversion of farnesyl pyrophosphate and isopentyl pyrophosphate into geranylgeranyl pyrophosphate (GGPP). Condensation of indole-3-glycerol phosphate with GGPP by the prenyl transferase penC then forms 3-geranylgeranylindole (3-GGI). Epoxidation by the FAD-dependent monooxygenase penM leads to a epoxidized-GGI that is substrate of the terpene cyclase penB for cyclization to yield paspaline. Paspaline is subsequently converted to 13-desoxypaxilline by the cytochrome P450 monooxygenase penP, the latter being then converted to paxilline by the cytochrome P450 monooxygenase penQ. Paxilline is converted to beta-paxitriol via C-10 ketoreduction by the short-chain dehydrogenase PC-15 which can be monoprenylated at the C-20 by the indole diterpene prenyltransferase penD. A two-step elimination (acetylation and elimination) process performed by the O-acetyltransferase PC-16 and the P.simplicissimum ptmI-ortholog not yet identified in P.crustosum, leads to the production of the prenylated form of penijanthine. The FAD-linked oxidoreductase ptmO then converts the prenylated form of penijanthine into PC-M5 which is in turn transformed into PC-M4 by the aromatic dimethylallyltransferase PC-22. A series of oxidation steps involving 4 cytochrome P450 monooxygenases (PC-21, PC-05, PC-23, PC-20) and a FAD-dependent monooxygenase (PC-14) are required for the transformation of PC-M4 to penitrems A and E. Synthesis of these final products is proposed to proceed via penitrems D and C (PC-21, PC-05, PC-14) and penitrems B and F (PC-21, PC-05, PC-14, PC-23). This chain is Terpene cyclase penB (penB), found in Penicillium crustosum (Blue mold fungus).